Here is a 371-residue protein sequence, read N- to C-terminus: 3-dehydroquinate synthase (371 aa).

NAD(+) contacts are provided by residues Asp-70–Lys-75, Gly-104–Asp-108, Thr-128–Thr-129, Lys-141, and Lys-150. 3 residues coordinate Zn(2+): Glu-183, His-246, and His-262.

The protein belongs to the sugar phosphate cyclases superfamily. Dehydroquinate synthase family. Co(2+) is required as a cofactor. Zn(2+) serves as cofactor. It depends on NAD(+) as a cofactor.

The protein resides in the cytoplasm. The enzyme catalyses 7-phospho-2-dehydro-3-deoxy-D-arabino-heptonate = 3-dehydroquinate + phosphate. Its pathway is metabolic intermediate biosynthesis; chorismate biosynthesis; chorismate from D-erythrose 4-phosphate and phosphoenolpyruvate: step 2/7. Functionally, catalyzes the conversion of 3-deoxy-D-arabino-heptulosonate 7-phosphate (DAHP) to dehydroquinate (DHQ). The polypeptide is 3-dehydroquinate synthase (Saccharopolyspora erythraea (strain ATCC 11635 / DSM 40517 / JCM 4748 / NBRC 13426 / NCIMB 8594 / NRRL 2338)).